Consider the following 438-residue polypeptide: Coenzyme A disulfide reductase (438 aa).

8–33 is an FAD binding site; the sequence is GAVAGGATCASQIRRLDKESDIIIFE. Positions 15, 19, 22, 39, and 42 each coordinate substrate. The active-site Nucleophile is cysteine 43. The active-site Redox-active is cysteine 43. Residue lysine 71 participates in substrate binding. NADP(+) is bound at residue 151–166; the sequence is VLVVGAGYVSLEVLEN. An FAD-binding site is contributed by 267–277; sequence TNVPNIYAIGD. Histidine 299 serves as a coordination point for substrate. FAD is bound at residue tyrosine 419. Lysine 427 serves as a coordination point for substrate.

It belongs to the class-III pyridine nucleotide-disulfide oxidoreductase family. As to quaternary structure, homodimer. It depends on FAD as a cofactor.

It catalyses the reaction NADP(+) + 2 CoA = CoA-disulfide + NADPH + H(+). Functionally, catalyzes specifically the NADPH-dependent reduction of coenzyme A disulfide. The protein is Coenzyme A disulfide reductase of Staphylococcus aureus (strain MSSA476).